The following is a 39-amino-acid chain: Photosystem II reaction center protein L (39 aa).

A helical membrane pass occupies residues 18-38; sequence SLYLGLLLVFVLGILFSSYFF.

This sequence belongs to the PsbL family. PSII is composed of 1 copy each of membrane proteins PsbA, PsbB, PsbC, PsbD, PsbE, PsbF, PsbH, PsbI, PsbJ, PsbK, PsbL, PsbM, PsbT, PsbX, PsbY, PsbZ, Psb30/Ycf12, peripheral proteins PsbO, CyanoQ (PsbQ), PsbU, PsbV and a large number of cofactors. It forms dimeric complexes.

Its subcellular location is the cellular thylakoid membrane. Functionally, one of the components of the core complex of photosystem II (PSII). PSII is a light-driven water:plastoquinone oxidoreductase that uses light energy to abstract electrons from H(2)O, generating O(2) and a proton gradient subsequently used for ATP formation. It consists of a core antenna complex that captures photons, and an electron transfer chain that converts photonic excitation into a charge separation. This subunit is found at the monomer-monomer interface and is required for correct PSII assembly and/or dimerization. This chain is Photosystem II reaction center protein L, found in Trichormus variabilis (strain ATCC 29413 / PCC 7937) (Anabaena variabilis).